The primary structure comprises 344 residues: Succinylglutamate desuccinylase (344 aa).

The Zn(2+) site is built by histidine 63, glutamate 66, and histidine 160. The active site involves glutamate 224.

Belongs to the AspA/AstE family. Succinylglutamate desuccinylase subfamily. Requires Zn(2+) as cofactor.

It carries out the reaction N-succinyl-L-glutamate + H2O = L-glutamate + succinate. The protein operates within amino-acid degradation; L-arginine degradation via AST pathway; L-glutamate and succinate from L-arginine: step 5/5. Its function is as follows. Transforms N(2)-succinylglutamate into succinate and glutamate. In Shewanella putrefaciens (strain CN-32 / ATCC BAA-453), this protein is Succinylglutamate desuccinylase.